Here is a 133-residue protein sequence, read N- to C-terminus: ATP synthase epsilon chain, chloroplastic (133 aa).

The protein belongs to the ATPase epsilon chain family. As to quaternary structure, F-type ATPases have 2 components, CF(1) - the catalytic core - and CF(0) - the membrane proton channel. CF(1) has five subunits: alpha(3), beta(3), gamma(1), delta(1), epsilon(1). CF(0) has three main subunits: a, b and c.

It is found in the plastid. It localises to the chloroplast thylakoid membrane. Functionally, produces ATP from ADP in the presence of a proton gradient across the membrane. The protein is ATP synthase epsilon chain, chloroplastic of Eucalyptus globulus subsp. globulus (Tasmanian blue gum).